A 156-amino-acid chain; its full sequence is Small ribosomal subunit protein uS7 (156 aa).

It belongs to the universal ribosomal protein uS7 family. In terms of assembly, part of the 30S ribosomal subunit. Contacts proteins S9 and S11.

Functionally, one of the primary rRNA binding proteins, it binds directly to 16S rRNA where it nucleates assembly of the head domain of the 30S subunit. Is located at the subunit interface close to the decoding center, probably blocks exit of the E-site tRNA. The chain is Small ribosomal subunit protein uS7 from Synechococcus sp. (strain JA-3-3Ab) (Cyanobacteria bacterium Yellowstone A-Prime).